The sequence spans 381 residues: Queuine tRNA-ribosyltransferase (381 aa).

Aspartate 96 serves as the catalytic Proton acceptor. Substrate-binding positions include 96-100 (DSGGF), aspartate 150, glutamine 193, and glycine 220. An RNA binding region spans residues 251 to 257 (GVGAPDS). The active-site Nucleophile is the aspartate 270. Residues 275–279 (TRIAR) are RNA binding; important for wobble base 34 recognition. Zn(2+) contacts are provided by cysteine 308, cysteine 310, cysteine 313, and histidine 339.

The protein belongs to the queuine tRNA-ribosyltransferase family. Homodimer. Within each dimer, one monomer is responsible for RNA recognition and catalysis, while the other monomer binds to the replacement base PreQ1. Zn(2+) is required as a cofactor.

The catalysed reaction is 7-aminomethyl-7-carbaguanine + guanosine(34) in tRNA = 7-aminomethyl-7-carbaguanosine(34) in tRNA + guanine. The protein operates within tRNA modification; tRNA-queuosine biosynthesis. Its function is as follows. Catalyzes the base-exchange of a guanine (G) residue with the queuine precursor 7-aminomethyl-7-deazaguanine (PreQ1) at position 34 (anticodon wobble position) in tRNAs with GU(N) anticodons (tRNA-Asp, -Asn, -His and -Tyr). Catalysis occurs through a double-displacement mechanism. The nucleophile active site attacks the C1' of nucleotide 34 to detach the guanine base from the RNA, forming a covalent enzyme-RNA intermediate. The proton acceptor active site deprotonates the incoming PreQ1, allowing a nucleophilic attack on the C1' of the ribose to form the product. After dissociation, two additional enzymatic reactions on the tRNA convert PreQ1 to queuine (Q), resulting in the hypermodified nucleoside queuosine (7-(((4,5-cis-dihydroxy-2-cyclopenten-1-yl)amino)methyl)-7-deazaguanosine). The polypeptide is Queuine tRNA-ribosyltransferase (Enterococcus faecalis (strain ATCC 700802 / V583)).